Consider the following 62-residue polypeptide: Conotoxin Im11.9 (62 aa).

Positions 1-22 are cleaved as a signal peptide; that stretch reads MFRVTSVLLVIVLLNLVVLTNA. Cystine bridges form between cysteine 23–cysteine 33, cysteine 27–cysteine 38, cysteine 32–cysteine 41, and cysteine 37–cysteine 46. Positions 23–49 are excised as a propeptide; that stretch reads CHMDCSKMTCCSGICCFYCGRPMCPGT.

The protein belongs to the conotoxin I2 superfamily. Expressed by the venom duct.

It is found in the secreted. Its function is as follows. Probable neurotoxin. The chain is Conotoxin Im11.9 from Conus imperialis (Imperial cone).